The primary structure comprises 215 residues: Cytochrome b6 (215 aa).

Residues 32–52 (LFYCLGGITLTCFLIQVATGF) form a helical membrane-spanning segment. Residue Cys35 participates in heme c binding. Heme b contacts are provided by His86 and His100. 3 consecutive transmembrane segments (helical) span residues 90–110 (ASMMVLMMVLHVFRVYLTGGF), 116–136 (STWVTGVIMASCTVSFGVTGY), and 186–206 (LHTFVLPLLTAVFMLGHFLMI). Heme b contacts are provided by His187 and His202.

This sequence belongs to the cytochrome b family. PetB subfamily. As to quaternary structure, the 4 large subunits of the cytochrome b6-f complex are cytochrome b6, subunit IV (17 kDa polypeptide, PetD), cytochrome f and the Rieske protein, while the 4 small subunits are PetG, PetL, PetM and PetN. The complex functions as a dimer. Requires heme b as cofactor. It depends on heme c as a cofactor.

The protein localises to the plastid. It localises to the chloroplast thylakoid membrane. Its function is as follows. Component of the cytochrome b6-f complex, which mediates electron transfer between photosystem II (PSII) and photosystem I (PSI), cyclic electron flow around PSI, and state transitions. This is Cytochrome b6 from Bigelowiella natans (Pedinomonas minutissima).